Here is a 191-residue protein sequence, read N- to C-terminus: 3-isopropylmalate dehydratase small subunit (191 aa).

The protein belongs to the LeuD family. LeuD type 1 subfamily. Heterodimer of LeuC and LeuD.

The enzyme catalyses (2R,3S)-3-isopropylmalate = (2S)-2-isopropylmalate. Its pathway is amino-acid biosynthesis; L-leucine biosynthesis; L-leucine from 3-methyl-2-oxobutanoate: step 2/4. Its function is as follows. Catalyzes the isomerization between 2-isopropylmalate and 3-isopropylmalate, via the formation of 2-isopropylmaleate. The chain is 3-isopropylmalate dehydratase small subunit from Anaeromyxobacter dehalogenans (strain 2CP-C).